The primary structure comprises 221 residues: Endo-1,4-beta-xylanase 11A (221 aa).

The signal sequence occupies residues 1 to 18 (MKFATVLAFATAAGAAFA). One can recognise a GH11 domain in the interval 23 to 220 (SSETTEAGQL…GTGSASMSVS (198 aa)). E111 (nucleophile) is an active-site residue. N117 carries an N-linked (GlcNAc...) asparagine glycan. The active-site Proton donor is the E207.

This sequence belongs to the glycosyl hydrolase 11 (cellulase G) family.

The protein resides in the secreted. It catalyses the reaction Endohydrolysis of (1-&gt;4)-beta-D-xylosidic linkages in xylans.. The protein operates within glycan degradation; xylan degradation. In terms of biological role, endo-1,4-beta-xylanase involved in the hydrolysis of xylan, a major structural heterogeneous polysaccharide found in plant biomass representing the second most abundant polysaccharide in the biosphere, after cellulose. This is Endo-1,4-beta-xylanase 11A (XYN11A) from Mycosarcoma maydis (Corn smut fungus).